Consider the following 334-residue polypeptide: Holliday junction branch migration complex subunit RuvB (334 aa).

A large ATPase domain (RuvB-L) region spans residues 4-184 (EDRLISGTQK…FGIVQRLEYY (181 aa)). Residues isoleucine 23, arginine 24, glycine 65, lysine 68, threonine 69, threonine 70, 131–133 (EDY), arginine 174, tyrosine 184, and arginine 221 each bind ATP. Mg(2+) is bound at residue threonine 69. Residues 185–255 (DLKSLTRIVL…VAKLALDMLE (71 aa)) form a small ATPAse domain (RuvB-S) region. Residues 258-334 (NEGFDYMDRK…YLHFGFDKPQ (77 aa)) are head domain (RuvB-H). DNA-binding residues include arginine 313 and arginine 318.

The protein belongs to the RuvB family. As to quaternary structure, homohexamer. Forms an RuvA(8)-RuvB(12)-Holliday junction (HJ) complex. HJ DNA is sandwiched between 2 RuvA tetramers; dsDNA enters through RuvA and exits via RuvB. An RuvB hexamer assembles on each DNA strand where it exits the tetramer. Each RuvB hexamer is contacted by two RuvA subunits (via domain III) on 2 adjacent RuvB subunits; this complex drives branch migration. In the full resolvosome a probable DNA-RuvA(4)-RuvB(12)-RuvC(2) complex forms which resolves the HJ.

Its subcellular location is the cytoplasm. The catalysed reaction is ATP + H2O = ADP + phosphate + H(+). Functionally, the RuvA-RuvB-RuvC complex processes Holliday junction (HJ) DNA during genetic recombination and DNA repair, while the RuvA-RuvB complex plays an important role in the rescue of blocked DNA replication forks via replication fork reversal (RFR). RuvA specifically binds to HJ cruciform DNA, conferring on it an open structure. The RuvB hexamer acts as an ATP-dependent pump, pulling dsDNA into and through the RuvAB complex. RuvB forms 2 homohexamers on either side of HJ DNA bound by 1 or 2 RuvA tetramers; 4 subunits per hexamer contact DNA at a time. Coordinated motions by a converter formed by DNA-disengaged RuvB subunits stimulates ATP hydrolysis and nucleotide exchange. Immobilization of the converter enables RuvB to convert the ATP-contained energy into a lever motion, pulling 2 nucleotides of DNA out of the RuvA tetramer per ATP hydrolyzed, thus driving DNA branch migration. The RuvB motors rotate together with the DNA substrate, which together with the progressing nucleotide cycle form the mechanistic basis for DNA recombination by continuous HJ branch migration. Branch migration allows RuvC to scan DNA until it finds its consensus sequence, where it cleaves and resolves cruciform DNA. The polypeptide is Holliday junction branch migration complex subunit RuvB (Psychromonas ingrahamii (strain DSM 17664 / CCUG 51855 / 37)).